A 406-amino-acid chain; its full sequence is Fosmidomycin resistance protein (406 aa).

Topologically, residues 1-42 (MAMSEQPQPVAGAAASTTKARTSFGILGAISLSHLLNDMIQS) are periplasmic. Transmembrane regions (helical) follow at residues 43–63 (LILA…MQIG) and 64–84 (MITL…GYWT). Residues 85-102 (DKYPMPWSLPIGMCFTLS) are Periplasmic-facing. The helical transmembrane segment at 103 to 123 (GLVLLALAGSFGAVLLAAALV) threads the bilayer. At 124–151 (GTGSSVFHPESSRVARMASGGRHGLAQS) the chain is on the cytoplasmic side. A helical membrane pass occupies residues 152–172 (IFQVGGNFGSSLGPLLAAVII). Residues 173–177 (APYGK) lie on the Periplasmic side of the membrane. The chain crosses the membrane as a helical span at residues 178–198 (GNVAWFVLAALLAIVVLAQIS). The Cytoplasmic portion of the chain corresponds to 199-225 (RWYSAQHRMNKGKPKATIINPLPRNKV). A helical transmembrane segment spans residues 226–246 (VLAVSILLILIFSKYFYMASI). Residues 247–266 (SSYYTFYLMQKFGLSIQNAQ) are Periplasmic-facing. The helical transmembrane segment at 267–287 (LHLFAFLFAVAAGTVIGGPVG) threads the bilayer. The Cytoplasmic segment spans residues 288–294 (DKIGRKY). Residues 295–315 (VIWGSILGVAPFTLILPYASL) form a helical membrane-spanning segment. Topologically, residues 316–319 (HWTG) are periplasmic. A helical membrane pass occupies residues 320–340 (VLTVIIGFILASAFSAILVYA). Residues 341 to 353 (QELLPGRIGMVSG) lie on the Cytoplasmic side of the membrane. A helical membrane pass occupies residues 354 to 374 (LFFGFAFGMGGLGAAVLGLIA). The Periplasmic portion of the chain corresponds to 375-378 (DHTS). Residues 379–399 (IELVYKICAFLPLLGMLTIFL) traverse the membrane as a helical segment. Topologically, residues 400-406 (PDNRHKD) are cytoplasmic.

The protein belongs to the major facilitator superfamily.

It is found in the cell inner membrane. Its function is as follows. Confers the resistance against fosmidomycin. The polypeptide is Fosmidomycin resistance protein (fsr) (Escherichia coli (strain K12)).